Consider the following 346-residue polypeptide: tRNA N6-adenosine threonylcarbamoyltransferase (346 aa).

Residues His-111 and His-115 each coordinate Fe cation. Substrate is bound by residues 134-138, Asp-167, Gly-180, and Asn-277; that span reads LVSGG. Asp-305 serves as a coordination point for Fe cation.

It belongs to the KAE1 / TsaD family. It depends on Fe(2+) as a cofactor.

The protein localises to the cytoplasm. It carries out the reaction L-threonylcarbamoyladenylate + adenosine(37) in tRNA = N(6)-L-threonylcarbamoyladenosine(37) in tRNA + AMP + H(+). Its function is as follows. Required for the formation of a threonylcarbamoyl group on adenosine at position 37 (t(6)A37) in tRNAs that read codons beginning with adenine. Is involved in the transfer of the threonylcarbamoyl moiety of threonylcarbamoyl-AMP (TC-AMP) to the N6 group of A37, together with TsaE and TsaB. TsaD likely plays a direct catalytic role in this reaction. The chain is tRNA N6-adenosine threonylcarbamoyltransferase from Bordetella bronchiseptica (strain ATCC BAA-588 / NCTC 13252 / RB50) (Alcaligenes bronchisepticus).